The following is a 133-amino-acid chain: Small ribosomal subunit protein uS8 (133 aa).

Residues 1-28 (MANHDPISDMLTRIRNASEKRHEKTKVP) form a disordered region. Residues 16-26 (NASEKRHEKTK) show a composition bias toward basic and acidic residues.

This sequence belongs to the universal ribosomal protein uS8 family. In terms of assembly, part of the 30S ribosomal subunit. Contacts proteins S5 and S12.

In terms of biological role, one of the primary rRNA binding proteins, it binds directly to 16S rRNA central domain where it helps coordinate assembly of the platform of the 30S subunit. In Prochlorococcus marinus (strain NATL2A), this protein is Small ribosomal subunit protein uS8.